Here is a 623-residue protein sequence, read N- to C-terminus: Quinoprotein ethanol dehydrogenase (623 aa).

A signal peptide spans 1 to 34 (MTIRSLPAALSPLSMAVQAVLLVSSLALAPAANA). Ca(2+) contacts are provided by Asp-45 and Asn-51. Glu-95 serves as a coordination point for pyrroloquinoline quinone. The cysteines at positions 139 and 140 are disulfide-linked. Pyrroloquinoline quinone is bound by residues Arg-145, Thr-189, and 207–209 (HGS). Position 213 (Glu-213) interacts with Ca(2+). Positions 242-279 (GRLNGKDSTPTGDVKAPSWPDDPTTETGKVESWSHGGG) are disordered. 2 residues coordinate Ca(2+): Asn-300 and Asp-350. The Proton acceptor role is filled by Asp-350. Residue Arg-378 coordinates pyrroloquinoline quinone. Residues 414 to 436 (RPVENEGQRPAKPLPGETKGKPV) form a disordered region. WD repeat units follow at residues 515 to 556 (EHNE…ELWK) and 559 to 601 (TGSG…LTKP). Residues Trp-523 and Ala-587 each contribute to the pyrroloquinoline quinone site.

The protein belongs to the bacterial PQQ dehydrogenase family. As to quaternary structure, homodimer. Pyrroloquinoline quinone serves as cofactor. It depends on Ca(2+) as a cofactor.

Its subcellular location is the periplasm. It carries out the reaction a primary alcohol + 2 Fe(III)-[cytochrome c] = an aldehyde + 2 Fe(II)-[cytochrome c] + 2 H(+). The catalysed reaction is ethanol + 2 Fe(III)-[cytochrome c] = acetaldehyde + 2 Fe(II)-[cytochrome c] + 2 H(+). The enzyme catalyses ethanol + A = acetaldehyde + AH2. It catalyses the reaction 1-propanol + 2 Fe(III)-[cytochrome c] = propanal + 2 Fe(II)-[cytochrome c] + 2 H(+). It participates in alcohol metabolism; ethanol degradation; acetate from ethanol: step 1/2. Enhanced by the presence of ethylamine or NH4(+) ions. Catalyzes the oxidation of ethanol and other primary alcohols to the corresponding aldehydes, except methanol, which is not a substrate. Uses a specific inducible cytochrome c550, encoded by the adjacent gene in the locus, as electron acceptor. Is a key enzyme of the carbon and energy metabolism during growth of P.putida on ethanol as the sole carbon and energy source. Displays lower activity on secondary alcohols, aldehydes and diols. Is not active with sugar alcohols such as glycerol and D-sorbitol. In vitro, reacts well with phenazine methosulfate (PMS) as an electron acceptor but not with NAD(P), potassium ferricyanide, or molecular oxygen. This Pseudomonas putida (Arthrobacter siderocapsulatus) protein is Quinoprotein ethanol dehydrogenase.